The chain runs to 220 residues: Adenylate kinase (220 aa).

Position 10-15 (10-15 (GAGKGT)) interacts with ATP. The tract at residues 30–59 (STGDMLRAAVKAGSPLGVEAKGYMDAGKLV) is NMP. AMP is bound by residues Thr-31, Arg-36, 57 to 59 (KLV), 85 to 88 (GFPR), and Gln-92. The segment at 122–159 (GRRTHPASGRTYHVKFNPPKVEGKDDVTGEPLIQRDDD) is LID. Residues Arg-123 and 132 to 133 (TY) contribute to the ATP site. Residues Arg-156 and Arg-167 each contribute to the AMP site. ATP is bound at residue Gly-206.

The protein belongs to the adenylate kinase family. Monomer.

The protein resides in the cytoplasm. It carries out the reaction AMP + ATP = 2 ADP. The protein operates within purine metabolism; AMP biosynthesis via salvage pathway; AMP from ADP: step 1/1. In terms of biological role, catalyzes the reversible transfer of the terminal phosphate group between ATP and AMP. Plays an important role in cellular energy homeostasis and in adenine nucleotide metabolism. This chain is Adenylate kinase, found in Burkholderia ambifaria (strain ATCC BAA-244 / DSM 16087 / CCUG 44356 / LMG 19182 / AMMD) (Burkholderia cepacia (strain AMMD)).